The chain runs to 607 residues: Glutamine--fructose-6-phosphate aminotransferase [isomerizing] (607 aa).

Residue cysteine 2 is the Nucleophile; for GATase activity of the active site. In terms of domain architecture, Glutamine amidotransferase type-2 spans 2–217; the sequence is CGIIGILGKR…DGDWAVLTRE (216 aa). 2 SIS domains span residues 277-422 and 455-597; these read TVRS…QRGF and ICRN…VDQP. Residue lysine 602 is the For Fru-6P isomerization activity of the active site.

Homodimer.

The protein localises to the cytoplasm. The catalysed reaction is D-fructose 6-phosphate + L-glutamine = D-glucosamine 6-phosphate + L-glutamate. Catalyzes the first step in hexosamine metabolism, converting fructose-6P into glucosamine-6P using glutamine as a nitrogen source. This Bartonella henselae (strain ATCC 49882 / DSM 28221 / CCUG 30454 / Houston 1) (Rochalimaea henselae) protein is Glutamine--fructose-6-phosphate aminotransferase [isomerizing].